The primary structure comprises 236 residues: Small ribosomal subunit protein uS5 (236 aa).

In terms of domain architecture, S5 DRBM spans 61–124 (ENQEIIDIAL…NYAKLNIIEI (64 aa)).

The protein belongs to the universal ribosomal protein uS5 family. As to quaternary structure, part of the 30S ribosomal subunit. Contacts protein S4.

Its function is as follows. With S4 and S12 plays an important role in translational accuracy. The polypeptide is Small ribosomal subunit protein uS5 (Pyrococcus horikoshii (strain ATCC 700860 / DSM 12428 / JCM 9974 / NBRC 100139 / OT-3)).